Here is a 598-residue protein sequence, read N- to C-terminus: Elongation factor 4 (598 aa).

Residues 2–183 (KKIRNFCIIA…AIIEKIPPPK (182 aa)) enclose the tr-type G domain. GTP contacts are provided by residues 14–19 (DHGKST) and 130–133 (NKVD).

Belongs to the TRAFAC class translation factor GTPase superfamily. Classic translation factor GTPase family. LepA subfamily.

The protein resides in the cell inner membrane. It catalyses the reaction GTP + H2O = GDP + phosphate + H(+). Required for accurate and efficient protein synthesis under certain stress conditions. May act as a fidelity factor of the translation reaction, by catalyzing a one-codon backward translocation of tRNAs on improperly translocated ribosomes. Back-translocation proceeds from a post-translocation (POST) complex to a pre-translocation (PRE) complex, thus giving elongation factor G a second chance to translocate the tRNAs correctly. Binds to ribosomes in a GTP-dependent manner. The sequence is that of Elongation factor 4 from Flavobacterium johnsoniae (strain ATCC 17061 / DSM 2064 / JCM 8514 / BCRC 14874 / CCUG 350202 / NBRC 14942 / NCIMB 11054 / UW101) (Cytophaga johnsonae).